The following is a 1058-amino-acid chain: MAIKKKKKETKSKDNNNDNLRNEKKSTNLENGKYDKKKVEIYEHGIGGITQNKNDNNKENAYDDDIYHDKSEHINVKYLNEKDYEIEKVSKRIYEENSKIKKISLHHKILKEELETKQLIEQNDKKKKNSLDYYKKVIIKLKNNINNMEEYTNNITNDINVLKAHIDDERNERIIYNNNMKILINEYNSLKKNIQDLNMQEKEQHKFNTKLKEELKELYKEKENMEKKHREDFKKLQQKIKEQKILSYENKINDLTKEKDKNKMENGEANKYEDKHNNNNIHNNNNIHNDNNICNDNNICNDNTIHNDNNICNDNNICNDNNICNDNNICNDNNIRNNNIISSNNKIHEKDNMINILNYYEDEKKKQLQNKIVMLKKLCLRILFINEYQIYNIKKLQENINNMNNAINSINLISYKKGDFDHIIINLNVSKEKNYSLISRINLLNYETNVLKQLIKKMKEKFKHLNLQNDEIINLKYDISNNMNEKMKHIKTSLLTNQETCNLKKKCFDDCLLYLKQLYTFIKNYENNNDKLNIKSQIINKDKNLHFNYIHKYNEDILVDENYINDFLIYIEKYIYSLNFYLPTQNFNYKKYLLHNGSIHNITLDTHASSKEYLQKEDSSEFNQHGHNLLRDSLNLNEQQENKDHLQHEEHTHEEEPKDANGDMVNIEDANGDMVNIEDANGDMVNIKDANGDMVNIKDTRGDIENIEDKSGDMENMKEPNGDMENMKEPNDDIQILKEPNDDIQILKEPNDDIQILKEPNDDIQILKEPNDDIQILKEPNDDIQILKEPNDDIQILKDPNDDIQILKEPNDDISTINNLTTHLSNENNLMTDLPKVDHKIKDEIQSEHILESTNISDDNINKENSLEIPLNYDHTQENILKNKNNMEDQNNLLEQNIMTDQLQNHKECEEFKPHDNKEKNNIINDDTKNLISDDTKNIISDDTKNIISNDTKKILSDDTKNIISDDTKNIINDDTKNISNDDIKNISNDDIKNIGNDNNKPYNEDHNIVTINDEKANYILNHFNSRNIEYDKLKEEIPNELLNIKYDSSKKSTISTN.

Residues 1-10 (MAIKKKKKET) are compositionally biased toward basic residues. The disordered stretch occupies residues 1-34 (MAIKKKKKETKSKDNNNDNLRNEKKSTNLENGKY). Residues 11–34 (KSKDNNNDNLRNEKKSTNLENGKY) are compositionally biased toward basic and acidic residues. The stretch at 515 to 544 (LKQLYTFIKNYENNNDKLNIKSQIINKDKN) forms a coiled coil. Basic and acidic residues predominate over residues 641–661 (ENKDHLQHEEHTHEEEPKDAN). Disordered regions lie at residues 641–665 (ENKD…GDMV) and 706–728 (NIED…ENMK). Residues 872-905 (NYDHTQENILKNKNNMEDQNNLLEQNIMTDQLQN) adopt a coiled-coil conformation.

In Plasmodium falciparum (isolate 3D7), this protein is Leucine-rich repeat and coiled-coil domain-containing protein PF3D7_0703800.